A 139-amino-acid polypeptide reads, in one-letter code: D-ribose pyranase (139 aa).

Histidine 20 functions as the Proton donor in the catalytic mechanism. Substrate is bound by residues aspartate 28, histidine 106, and tyrosine 128–asparagine 130.

This sequence belongs to the RbsD / FucU family. RbsD subfamily. As to quaternary structure, homodecamer.

The protein resides in the cytoplasm. The enzyme catalyses beta-D-ribopyranose = beta-D-ribofuranose. It functions in the pathway carbohydrate metabolism; D-ribose degradation; D-ribose 5-phosphate from beta-D-ribopyranose: step 1/2. Catalyzes the interconversion of beta-pyran and beta-furan forms of D-ribose. The protein is D-ribose pyranase of Salmonella arizonae (strain ATCC BAA-731 / CDC346-86 / RSK2980).